A 1436-amino-acid polypeptide reads, in one-letter code: Probable ATP-dependent RNA helicase spindle-E (1436 aa).

Residues 124 to 291 (LAAINANPVV…FTTTNSIPPV (168 aa)) form the Helicase ATP-binding domain. An ATP-binding site is contributed by 137–144 (GETGCGKT). The short motif at 237–240 (DEVH) is the DEAH box element. One can recognise a Helicase C-terminal domain in the interval 337 to 524 (KIIMVIDNME…NSVLRAKELE (188 aa)). Residues 940 to 1003 (ACDISKGMMV…RFMSEELIQQ (64 aa)) enclose the Tudor domain.

This sequence belongs to the DEAD box helicase family. DEAH subfamily.

The protein resides in the cytoplasm. It carries out the reaction ATP + H2O = ADP + phosphate + H(+). Functionally, probable ATP-binding RNA helicase which plays a central role during spermatogenesis and oogenesis by repressing transposable elements and preventing their mobilization, which is essential for the germline integrity. Acts via the piRNA metabolic process, which mediates the repression of transposable elements during meiosis by forming complexes composed of piRNAs and Piwi and govern the methylation and subsequent repression of transposons. Involved in the repression of LTR retrotransposon copia. Also involved in telomere regulation by repressing specialized telomeric retroelements HeT-A, TAHRE, and TART; Drosophila telomeres being maintained by transposition of specialized telomeric retroelements. Involved in telomeric trans-silencing, a repression mechanism by which a transposon or a transgene inserted in subtelomeric heterochromatin has the capacity to repress in trans in the female germline, a homologous transposon, or transgene located in euchromatin. Involved in the repression of testis-expressed Stellate genes by the homologous Su(Ste) repeats. Required for anteroposterior and dorsoventral axis formation during oogenesis. This is Probable ATP-dependent RNA helicase spindle-E (spn-E) from Drosophila yakuba (Fruit fly).